We begin with the raw amino-acid sequence, 184 residues long: ATP synthase subunit b 1 (184 aa).

A helical transmembrane segment spans residues 4 to 24 (LSILAVLAASPAMAATGPFLS).

This sequence belongs to the ATPase B chain family. As to quaternary structure, F-type ATPases have 2 components, F(1) - the catalytic core - and F(0) - the membrane proton channel. F(1) has five subunits: alpha(3), beta(3), gamma(1), delta(1), epsilon(1). F(0) has three main subunits: a(1), b(2) and c(10-14). The alpha and beta chains form an alternating ring which encloses part of the gamma chain. F(1) is attached to F(0) by a central stalk formed by the gamma and epsilon chains, while a peripheral stalk is formed by the delta and b chains.

The protein resides in the cell inner membrane. Functionally, f(1)F(0) ATP synthase produces ATP from ADP in the presence of a proton or sodium gradient. F-type ATPases consist of two structural domains, F(1) containing the extramembraneous catalytic core and F(0) containing the membrane proton channel, linked together by a central stalk and a peripheral stalk. During catalysis, ATP synthesis in the catalytic domain of F(1) is coupled via a rotary mechanism of the central stalk subunits to proton translocation. Its function is as follows. Component of the F(0) channel, it forms part of the peripheral stalk, linking F(1) to F(0). This chain is ATP synthase subunit b 1, found in Cereibacter sphaeroides (strain ATCC 17023 / DSM 158 / JCM 6121 / CCUG 31486 / LMG 2827 / NBRC 12203 / NCIMB 8253 / ATH 2.4.1.) (Rhodobacter sphaeroides).